The primary structure comprises 260 residues: Phytolongin Phyl2.1 (260 aa).

The Longin domain maps to 12-114 (CIAKGTVILA…LDNPTQHCLQ (103 aa)). Residues 231 to 251 (WIVLMFDLCICLVLFGIWLWI) traverse the membrane as a helical; Anchor for type IV membrane protein segment.

This sequence belongs to the synaptobrevin family.

Its subcellular location is the membrane. Its function is as follows. Non-SNARE longin protein involved in membrane-trafficking machinery. The chain is Phytolongin Phyl2.1 from Arabidopsis thaliana (Mouse-ear cress).